Consider the following 382-residue polypeptide: Chaperone protein DnaJ (382 aa).

One can recognise a J domain in the interval 5–70 (DYYETLGVSR…NKRAAYDRYG (66 aa)). The CR-type zinc finger occupies 140–218 (GKTAQIRVPT…CHGQGRITEE (79 aa)). 8 residues coordinate Zn(2+): cysteine 153, cysteine 156, cysteine 170, cysteine 173, cysteine 192, cysteine 195, cysteine 206, and cysteine 209. CXXCXGXG motif repeat units lie at residues 153–160 (CDVCSGSG), 170–177 (CGTCQGSG), 192–199 (CPTCHGRG), and 206–213 (CGKCHGQG).

The protein belongs to the DnaJ family. As to quaternary structure, homodimer. Requires Zn(2+) as cofactor.

It localises to the cytoplasm. Functionally, participates actively in the response to hyperosmotic and heat shock by preventing the aggregation of stress-denatured proteins and by disaggregating proteins, also in an autonomous, DnaK-independent fashion. Unfolded proteins bind initially to DnaJ; upon interaction with the DnaJ-bound protein, DnaK hydrolyzes its bound ATP, resulting in the formation of a stable complex. GrpE releases ADP from DnaK; ATP binding to DnaK triggers the release of the substrate protein, thus completing the reaction cycle. Several rounds of ATP-dependent interactions between DnaJ, DnaK and GrpE are required for fully efficient folding. Also involved, together with DnaK and GrpE, in the DNA replication of plasmids through activation of initiation proteins. This Rhizobium rhizogenes (strain K84 / ATCC BAA-868) (Agrobacterium radiobacter) protein is Chaperone protein DnaJ.